A 388-amino-acid polypeptide reads, in one-letter code: tRNA (guanine(26)-N(2))-dimethyltransferase (388 aa).

One can recognise a Trm1 methyltransferase domain in the interval 4–383 (KTIVEGTTKV…APITEIKEII (380 aa)). S-adenosyl-L-methionine-binding residues include Arg-41, Arg-78, Asp-94, and Ala-123. Residues Cys-251, Cys-254, Cys-271, and Cys-274 each contribute to the Zn(2+) site.

It belongs to the class I-like SAM-binding methyltransferase superfamily. Trm1 family.

The catalysed reaction is guanosine(26) in tRNA + 2 S-adenosyl-L-methionine = N(2)-dimethylguanosine(26) in tRNA + 2 S-adenosyl-L-homocysteine + 2 H(+). Its function is as follows. Dimethylates a single guanine residue at position 26 of a number of tRNAs using S-adenosyl-L-methionine as donor of the methyl groups. The chain is tRNA (guanine(26)-N(2))-dimethyltransferase from Methanosarcina barkeri (strain Fusaro / DSM 804).